We begin with the raw amino-acid sequence, 230 residues long: Heptaprenylglyceryl phosphate synthase (230 aa).

K12 lines the sn-glycerol 1-phosphate pocket. Residues D14 and T40 each coordinate Mg(2+). Sn-glycerol 1-phosphate is bound by residues 159 to 164 (YIEYSG), G189, and 209 to 210 (GD).

It belongs to the GGGP/HepGP synthase family. Group I subfamily. In terms of assembly, homodimer. Mg(2+) is required as a cofactor.

It catalyses the reaction sn-glycerol 1-phosphate + all-trans-heptaprenyl diphosphate = 3-heptaprenyl-sn-glycero-1-phosphate + diphosphate. The protein operates within membrane lipid metabolism; glycerophospholipid metabolism. Functionally, prenyltransferase that catalyzes in vivo the transfer of the heptaprenyl moiety of heptaprenyl pyrophosphate (HepPP; 35 carbon atoms) to the C3 hydroxyl of sn-glycerol-1-phosphate (G1P), producing heptaprenylglyceryl phosphate (HepGP). This reaction is an ether-bond-formation step in the biosynthesis of archaea-type G1P-based membrane lipids found in Bacillales. This Staphylococcus aureus (strain JH1) protein is Heptaprenylglyceryl phosphate synthase.